Consider the following 193-residue polypeptide: Fe/S biogenesis protein NfuA (193 aa).

Residues cysteine 150 and cysteine 153 each coordinate [4Fe-4S] cluster.

The protein belongs to the NfuA family. Homodimer. [4Fe-4S] cluster is required as a cofactor.

In terms of biological role, involved in iron-sulfur cluster biogenesis. Binds a 4Fe-4S cluster, can transfer this cluster to apoproteins, and thereby intervenes in the maturation of Fe/S proteins. Could also act as a scaffold/chaperone for damaged Fe/S proteins. The polypeptide is Fe/S biogenesis protein NfuA (Histophilus somni (strain 129Pt) (Haemophilus somnus)).